The following is a 176-amino-acid chain: Alkyl hydroperoxide reductase AhpD (176 aa).

Cysteine 131 functions as the Proton donor in the catalytic mechanism. Cysteine 131 and cysteine 134 are joined by a disulfide. Cysteine 134 (cysteine sulfenic acid (-SOH) intermediate) is an active-site residue.

Belongs to the AhpD family.

It carries out the reaction N(6)-[(R)-dihydrolipoyl]-L-lysyl-[lipoyl-carrier protein] + a hydroperoxide = N(6)-[(R)-lipoyl]-L-lysyl-[lipoyl-carrier protein] + an alcohol + H2O. Functionally, antioxidant protein with alkyl hydroperoxidase activity. Required for the reduction of the AhpC active site cysteine residues and for the regeneration of the AhpC enzyme activity. The polypeptide is Alkyl hydroperoxide reductase AhpD (Methylobacterium sp. (strain 4-46)).